Here is a 1084-residue protein sequence, read N- to C-terminus: Probable hemoglobin and hemoglobin-haptoglobin-binding protein 3 (1084 aa).

The N-terminal stretch at 1 to 24 (MTNFKFSLLACSIAFALNASTVYA) is a signal peptide. 12 repeat units span residues 26–29 (QPTN), 30–33 (QPTN), 34–37 (QPTN), 38–41 (QPTN), 42–45 (QPTN), 46–49 (QPTN), 50–53 (QPTN), 54–57 (QPTN), 58–61 (QPTN), 62–65 (QPTN), 66–69 (QPTN), and 70–73 (QPTN). The segment at 26-73 (QPTNQPTNQPTNQPTNQPTNQPTNQPTNQPTNQPTNQPTNQPTNQPTN) is 12 X 4 AA tandem repeats of Q-P-T-N. Over residues 26–75 (QPTNQPTNQPTNQPTNQPTNQPTNQPTNQPTNQPTNQPTNQPTNQPTNQN) the composition is skewed to low complexity. The disordered stretch occupies residues 26–77 (QPTNQPTNQPTNQPTNQPTNQPTNQPTNQPTNQPTNQPTNQPTNQPTNQNSN). A TonB box motif is present at residues 83 to 90 (EQINVSGS). The 126-residue stretch at 95 to 220 (NIKEKKVGET…LGGSVIFETK (126 aa)) folds into the TBDR plug domain. The 857-residue stretch at 228–1084 (DKDYYLSYKR…NYRMSVQFEF (857 aa)) folds into the TBDR beta-barrel domain. A TonB C-terminal box motif is present at residues 1067–1084 (NRFYAPGRNYRMSVQFEF).

This sequence belongs to the TonB-dependent receptor family. Hemoglobin/haptoglobin binding protein subfamily.

The protein resides in the cell outer membrane. Its function is as follows. Acts as a receptor for hemoglobin or the hemoglobin/haptoglobin complex of the human host and is required for heme uptake. In Haemophilus influenzae (strain ATCC 51907 / DSM 11121 / KW20 / Rd), this protein is Probable hemoglobin and hemoglobin-haptoglobin-binding protein 3.